Consider the following 293-residue polypeptide: Small ribosomal subunit biogenesis GTPase RsgA (293 aa).

The region spanning 63–223 is the CP-type G domain; the sequence is KNELVRPPIA…VADTPGFSSL (161 aa). Residues 112-115 and 166-174 contribute to the GTP site; these read SKMD and GQSGVGKSS. Cys247, Cys252, His254, and Cys260 together coordinate Zn(2+).

This sequence belongs to the TRAFAC class YlqF/YawG GTPase family. RsgA subfamily. As to quaternary structure, monomer. Associates with 30S ribosomal subunit, binds 16S rRNA. Zn(2+) serves as cofactor.

The protein localises to the cytoplasm. One of several proteins that assist in the late maturation steps of the functional core of the 30S ribosomal subunit. Helps release RbfA from mature subunits. May play a role in the assembly of ribosomal proteins into the subunit. Circularly permuted GTPase that catalyzes slow GTP hydrolysis, GTPase activity is stimulated by the 30S ribosomal subunit. In Bacillus anthracis, this protein is Small ribosomal subunit biogenesis GTPase RsgA.